Reading from the N-terminus, the 214-residue chain is Small ribosomal subunit protein uS5 (214 aa).

Residues M1 to R61 are disordered. Residues N9–Q29 show a composition bias toward low complexity. Over residues E30 to E60 the composition is skewed to basic and acidic residues. The 64-residue stretch at W58 to V121 folds into the S5 DRBM domain.

Belongs to the universal ribosomal protein uS5 family. As to quaternary structure, part of the 30S ribosomal subunit. Contacts proteins S4 and S8.

Its function is as follows. With S4 and S12 plays an important role in translational accuracy. In terms of biological role, located at the back of the 30S subunit body where it stabilizes the conformation of the head with respect to the body. In Synechococcus sp. (strain CC9605), this protein is Small ribosomal subunit protein uS5.